The primary structure comprises 30 residues: Bowman-Birk type proteinase inhibitor 4 (30 aa).

2 cysteine pairs are disulfide-bonded: Cys-9–Cys-24 and Cys-14–Cys-22.

Functionally, inhibits trypsin (IC(50)=17.60 nM) and, to a lesser extent, alpha-chymotrypsin (IC(50)=2.38 uM). This Lathyrus sativus (White vetchling) protein is Bowman-Birk type proteinase inhibitor 4.